The primary structure comprises 277 residues: 3-methyl-2-oxobutanoate hydroxymethyltransferase (277 aa).

Mg(2+) is bound by residues Asp43 and Asp82. 3-methyl-2-oxobutanoate is bound by residues 43–44 (DS), Asp82, and Lys112. Glu114 provides a ligand contact to Mg(2+). Glu181 serves as the catalytic Proton acceptor.

Belongs to the PanB family. In terms of assembly, homodecamer; pentamer of dimers. Mg(2+) serves as cofactor.

The protein resides in the cytoplasm. It carries out the reaction 3-methyl-2-oxobutanoate + (6R)-5,10-methylene-5,6,7,8-tetrahydrofolate + H2O = 2-dehydropantoate + (6S)-5,6,7,8-tetrahydrofolate. It functions in the pathway cofactor biosynthesis; (R)-pantothenate biosynthesis; (R)-pantoate from 3-methyl-2-oxobutanoate: step 1/2. Catalyzes the reversible reaction in which hydroxymethyl group from 5,10-methylenetetrahydrofolate is transferred onto alpha-ketoisovalerate to form ketopantoate. This chain is 3-methyl-2-oxobutanoate hydroxymethyltransferase, found in Listeria innocua serovar 6a (strain ATCC BAA-680 / CLIP 11262).